Here is a 311-residue protein sequence, read N- to C-terminus: HTH-type transcriptional regulator DsdC (311 aa).

The region spanning 15–72 is the HTH lysR-type domain; it reads WQLSKMHTFEVAARHQSFALAAEELSLSPSAVSHRINQLEEELGIQLFVRSHRKVELT. Residues 32-51 constitute a DNA-binding region (H-T-H motif); that stretch reads FALAAEELSLSPSAVSHRIN.

This sequence belongs to the LysR transcriptional regulatory family.

Functionally, regulates the expression of the dsdX-dsdA operon. This chain is HTH-type transcriptional regulator DsdC, found in Escherichia coli (strain K12).